The primary structure comprises 451 residues: Phosphoglucosamine mutase (451 aa).

The Phosphoserine intermediate role is filled by Ser101. Mg(2+)-binding residues include Ser101, Asp243, Asp245, and Asp247. Ser101 is modified (phosphoserine).

This sequence belongs to the phosphohexose mutase family. Mg(2+) is required as a cofactor. Activated by phosphorylation.

The catalysed reaction is alpha-D-glucosamine 1-phosphate = D-glucosamine 6-phosphate. Functionally, catalyzes the conversion of glucosamine-6-phosphate to glucosamine-1-phosphate. This Thermodesulfovibrio yellowstonii (strain ATCC 51303 / DSM 11347 / YP87) protein is Phosphoglucosamine mutase.